We begin with the raw amino-acid sequence, 64 residues long: Prokaryotic ubiquitin-like protein Pup (64 aa).

The tract at residues 1–35 (MAQGGQVSAGGGRRDDDEPIEQTSGAGTQQVNVTG) is disordered. The span at 21–33 (EQTSGAGTQQVNV) shows a compositional bias: polar residues. The ARC ATPase binding stretch occupies residues 21–58 (EQTSGAGTQQVNVTGTDDLLDEIDGLLENNAEEFVRSY). Gln-64 carries the post-translational modification Deamidated glutamine. An Isoglutamyl lysine isopeptide (Gln-Lys) (interchain with K-? in acceptor proteins) cross-link involves residue Gln-64.

This sequence belongs to the prokaryotic ubiquitin-like protein family. Strongly interacts with the proteasome-associated ATPase ARC through a hydrophobic interface; the interacting region of Pup lies in its C-terminal half. There is one Pup binding site per ARC hexamer ring. In terms of processing, is modified by deamidation of its C-terminal glutamine to glutamate by the deamidase Dop, a prerequisite to the subsequent pupylation process.

It participates in protein degradation; proteasomal Pup-dependent pathway. Protein modifier that is covalently attached to lysine residues of substrate proteins, thereby targeting them for proteasomal degradation. The tagging system is termed pupylation. The sequence is that of Prokaryotic ubiquitin-like protein Pup from Corynebacterium jeikeium (strain K411).